The sequence spans 725 residues: Phosphoribosylformylglycinamidine synthase subunit PurL (725 aa).

His-34 is a catalytic residue. Residue Tyr-37 participates in ATP binding. A Mg(2+)-binding site is contributed by Glu-93. Substrate contacts are provided by residues 94-97 (SHNH) and Arg-116. Residue His-95 is the Proton acceptor of the active site. Asp-117 is a Mg(2+) binding site. The segment at 220–241 (GASFASEDLSEDAETEDRPAVQ) is disordered. Gln-241 is a substrate binding site. Asp-269 contributes to the Mg(2+) binding site. 313–315 (ESQ) lines the substrate pocket. ATP-binding residues include Asp-489 and Gly-526. Mg(2+) is bound at residue Asn-527. Residue Ser-529 coordinates substrate.

The protein belongs to the FGAMS family. As to quaternary structure, monomer. Part of the FGAM synthase complex composed of 1 PurL, 1 PurQ and 2 PurS subunits.

Its subcellular location is the cytoplasm. It catalyses the reaction N(2)-formyl-N(1)-(5-phospho-beta-D-ribosyl)glycinamide + L-glutamine + ATP + H2O = 2-formamido-N(1)-(5-O-phospho-beta-D-ribosyl)acetamidine + L-glutamate + ADP + phosphate + H(+). Its pathway is purine metabolism; IMP biosynthesis via de novo pathway; 5-amino-1-(5-phospho-D-ribosyl)imidazole from N(2)-formyl-N(1)-(5-phospho-D-ribosyl)glycinamide: step 1/2. Functionally, part of the phosphoribosylformylglycinamidine synthase complex involved in the purines biosynthetic pathway. Catalyzes the ATP-dependent conversion of formylglycinamide ribonucleotide (FGAR) and glutamine to yield formylglycinamidine ribonucleotide (FGAM) and glutamate. The FGAM synthase complex is composed of three subunits. PurQ produces an ammonia molecule by converting glutamine to glutamate. PurL transfers the ammonia molecule to FGAR to form FGAM in an ATP-dependent manner. PurS interacts with PurQ and PurL and is thought to assist in the transfer of the ammonia molecule from PurQ to PurL. In Haloquadratum walsbyi (strain DSM 16790 / HBSQ001), this protein is Phosphoribosylformylglycinamidine synthase subunit PurL.